A 224-amino-acid chain; its full sequence is Deoxyribose-phosphate aldolase (224 aa).

The Proton donor/acceptor role is filled by Asp-91. Lys-152 functions as the Schiff-base intermediate with acetaldehyde in the catalytic mechanism. Lys-181 (proton donor/acceptor) is an active-site residue.

Belongs to the DeoC/FbaB aldolase family. DeoC type 1 subfamily.

It is found in the cytoplasm. The catalysed reaction is 2-deoxy-D-ribose 5-phosphate = D-glyceraldehyde 3-phosphate + acetaldehyde. It functions in the pathway carbohydrate degradation; 2-deoxy-D-ribose 1-phosphate degradation; D-glyceraldehyde 3-phosphate and acetaldehyde from 2-deoxy-alpha-D-ribose 1-phosphate: step 2/2. Its function is as follows. Catalyzes a reversible aldol reaction between acetaldehyde and D-glyceraldehyde 3-phosphate to generate 2-deoxy-D-ribose 5-phosphate. The protein is Deoxyribose-phosphate aldolase of Mycoplasma pneumoniae (strain ATCC 29342 / M129 / Subtype 1) (Mycoplasmoides pneumoniae).